The sequence spans 251 residues: Coproheme decarboxylase (251 aa).

Fe-coproporphyrin III is bound by residues Arg-133, 147-151 (YPMSK), His-174, Gln-187, and Ser-225. Tyr-147 is an active-site residue.

Belongs to the ChdC family. Type 1 subfamily. In terms of assembly, homopentamer. Homohexamer in solution. It depends on Fe-coproporphyrin III as a cofactor.

It catalyses the reaction Fe-coproporphyrin III + 2 H2O2 + 2 H(+) = heme b + 2 CO2 + 4 H2O. The enzyme catalyses Fe-coproporphyrin III + H2O2 + H(+) = harderoheme III + CO2 + 2 H2O. It carries out the reaction harderoheme III + H2O2 + H(+) = heme b + CO2 + 2 H2O. It functions in the pathway porphyrin-containing compound metabolism; protoheme biosynthesis. Involved in coproporphyrin-dependent heme b biosynthesis. Catalyzes the decarboxylation of Fe-coproporphyrin III (coproheme) to heme b (protoheme IX), the last step of the pathway. The reaction occurs in a stepwise manner with a three-propionate intermediate. This is Coproheme decarboxylase from Listeria monocytogenes serovar 1/2a (strain ATCC BAA-679 / EGD-e).